The following is a 226-amino-acid chain: V-type proton ATPase subunit E 2 (226 aa).

Belongs to the V-ATPase E subunit family. As to quaternary structure, V-ATPase is a heteromultimeric enzyme made up of two complexes: the ATP-hydrolytic V1 complex and the proton translocation V0 complex. The V1 complex consists of three catalytic AB heterodimers that form a heterohexamer, three peripheral stalks each consisting of EG heterodimers, one central rotor including subunits D and F, and the regulatory subunits C and H. The proton translocation complex V0 consists of the proton transport subunit a, a ring of proteolipid subunits c9c'', rotary subunit d, subunits e and f, and the accessory subunits ATP6AP1/Ac45 and ATP6AP2/PRR.

In terms of biological role, subunit of the V1 complex of vacuolar(H+)-ATPase (V-ATPase), a multisubunit enzyme composed of a peripheral complex (V1) that hydrolyzes ATP and a membrane integral complex (V0) that translocates protons. V-ATPase is responsible for acidifying and maintaining the pH of intracellular compartments and in some cell types, is targeted to the plasma membrane, where it is responsible for acidifying the extracellular environment. The chain is V-type proton ATPase subunit E 2 (ATP6V1E2) from Bos taurus (Bovine).